Here is a 587-residue protein sequence, read N- to C-terminus: Nucleoporin ndc-1 (587 aa).

At Met-1–Lys-79 the chain is on the cytoplasmic side. The interval Ala-32–Ala-55 is disordered. The chain crosses the membrane as a helical span at residues Leu-80–Leu-100. The Perinuclear space segment spans residues Lys-101–Pro-121. Residues Thr-122 to Ile-142 form a helical membrane-spanning segment. The Cytoplasmic segment spans residues His-143–Ala-161. Residues Trp-162–Val-182 form a helical membrane-spanning segment. Residues Ser-183 to Phe-187 lie on the Perinuclear space side of the membrane. A helical membrane pass occupies residues Phe-188–Ile-208. Residues Phe-209–Ala-255 lie on the Cytoplasmic side of the membrane. Residues Met-256 to Ile-276 traverse the membrane as a helical segment. Residues Asn-277–His-281 lie on the Perinuclear space side of the membrane. Residues Leu-282 to Val-302 traverse the membrane as a helical segment. The Cytoplasmic segment spans residues Asn-303 to Ile-587.

It belongs to the NDC1 family.

Its subcellular location is the nucleus. The protein localises to the nuclear pore complex. It is found in the nucleus membrane. Component of the nuclear pore complex (NPC), which plays a key role in de novo assembly and insertion of NPC in the nuclear envelope. The protein is Nucleoporin ndc-1 (npp-22) of Caenorhabditis briggsae.